A 516-amino-acid polypeptide reads, in one-letter code: Cytochrome P450 1A2 (516 aa).

S69 is a glycosylation site (O-linked (GlcNAc) serine). F226 provides a ligand contact to substrate. A heme-binding site is contributed by C458.

Belongs to the cytochrome P450 family. In terms of assembly, interacts with PGRMC1; the interaction requires PGRMC1 homodimerization. The cofactor is heme. Liver.

It localises to the endoplasmic reticulum membrane. The protein resides in the microsome membrane. It catalyses the reaction an organic molecule + reduced [NADPH--hemoprotein reductase] + O2 = an alcohol + oxidized [NADPH--hemoprotein reductase] + H2O + H(+). It carries out the reaction 17beta-estradiol + reduced [NADPH--hemoprotein reductase] + O2 = 2-hydroxy-17beta-estradiol + oxidized [NADPH--hemoprotein reductase] + H2O + H(+). The enzyme catalyses 17beta-estradiol + reduced [NADPH--hemoprotein reductase] + O2 = 4-hydroxy-17beta-estradiol + oxidized [NADPH--hemoprotein reductase] + H2O + H(+). The catalysed reaction is estrone + reduced [NADPH--hemoprotein reductase] + O2 = 2-hydroxyestrone + oxidized [NADPH--hemoprotein reductase] + H2O + H(+). It catalyses the reaction estrone + reduced [NADPH--hemoprotein reductase] + O2 = 4-hydroxyestrone + oxidized [NADPH--hemoprotein reductase] + H2O + H(+). It carries out the reaction cholesterol + reduced [NADPH--hemoprotein reductase] + O2 = 25-hydroxycholesterol + oxidized [NADPH--hemoprotein reductase] + H2O + H(+). The enzyme catalyses all-trans-retinol + reduced [NADPH--hemoprotein reductase] + O2 = all-trans-retinal + oxidized [NADPH--hemoprotein reductase] + 2 H2O + H(+). The catalysed reaction is all-trans-retinal + reduced [NADPH--hemoprotein reductase] + O2 = all-trans-retinoate + oxidized [NADPH--hemoprotein reductase] + H2O + 2 H(+). It catalyses the reaction (5Z,8Z,11Z,14Z)-eicosatetraenoate + reduced [NADPH--hemoprotein reductase] + O2 = (14R,15S)-epoxy-(5Z,8Z,11Z)-eicosatrienoate + oxidized [NADPH--hemoprotein reductase] + H2O + H(+). It carries out the reaction (5Z,8Z,11Z,14Z)-eicosatetraenoate + reduced [NADPH--hemoprotein reductase] + O2 = (14S,15R)-epoxy-(5Z,8Z,11Z)-eicosatrienoate + oxidized [NADPH--hemoprotein reductase] + H2O + H(+). The enzyme catalyses (5Z,8Z,11Z,14Z,17Z)-eicosapentaenoate + reduced [NADPH--hemoprotein reductase] + O2 = (17R,18S)-epoxy-(5Z,8Z,11Z,14Z)-eicosatetraenoate + oxidized [NADPH--hemoprotein reductase] + H2O + H(+). The catalysed reaction is (4Z,7Z,10Z,13Z,16Z,19Z)-docosahexaenoate + reduced [NADPH--hemoprotein reductase] + O2 = (19R,20S)-epoxy-(4Z,7Z,10Z,13Z,16Z)-docosapentaenoate + oxidized [NADPH--hemoprotein reductase] + H2O + H(+). It catalyses the reaction (5S)-hydroperoxy-(6E,8Z,11Z,14Z)-eicosatetraenoate = 5-oxo-(6E,8Z,11Z,14Z)-eicosatetraenoate + H2O. It carries out the reaction (12S)-hydroperoxy-(5Z,8Z,10E,14Z)-eicosatetraenoate = 12-oxo-(5Z,8Z,10E,14Z)-eicosatetraenoate + H2O. The enzyme catalyses (15S)-hydroperoxy-(5Z,8Z,11Z,13E)-eicosatetraenoate = 15-oxo-(5Z,8Z,11Z,13E)-eicosatetraenoate + H2O. The catalysed reaction is (13S)-hydroperoxy-(9Z,11E)-octadecadienoate = 13-oxo-(9Z,11E)-octadecadienoate + H2O. It catalyses the reaction (5Z,8Z,11Z,14Z)-eicosatetraenoate + reduced [NADPH--hemoprotein reductase] + O2 = 13-hydroxy-(5Z,8Z,11Z,14Z)-eicosatetraenoate + oxidized [NADPH--hemoprotein reductase] + H2O + H(+). It carries out the reaction (5Z,8Z,11Z,14Z)-eicosatetraenoate + reduced [NADPH--hemoprotein reductase] + O2 = 19-hydroxy-(5Z,8Z,11Z,14Z)-eicosatetraenoate + oxidized [NADPH--hemoprotein reductase] + H2O + H(+). The enzyme catalyses (9Z,12Z)-octadecadienoate + reduced [NADPH--hemoprotein reductase] + O2 = 11-hydroxy-(9Z,12Z)-octadecadienoate + oxidized [NADPH--hemoprotein reductase] + H2O + H(+). The protein operates within cofactor metabolism; retinol metabolism. It participates in steroid metabolism; cholesterol metabolism. Its pathway is lipid metabolism; arachidonate metabolism. Its function is as follows. A cytochrome P450 monooxygenase involved in the metabolism of various endogenous substrates, including fatty acids, steroid hormones and vitamins. Mechanistically, uses molecular oxygen inserting one oxygen atom into a substrate, and reducing the second into a water molecule, with two electrons provided by NADPH via cytochrome P450 reductase (NADPH--hemoprotein reductase). Catalyzes the hydroxylation of carbon-hydrogen bonds. Exhibits high catalytic activity for the formation of hydroxyestrogens from estrone (E1) and 17beta-estradiol (E2), namely 2-hydroxy E1 and E2. Metabolizes cholesterol toward 25-hydroxycholesterol, a physiological regulator of cellular cholesterol homeostasis. May act as a major enzyme for all-trans retinoic acid biosynthesis in the liver. Catalyzes two successive oxidative transformation of all-trans retinol to all-trans retinal and then to the active form all-trans retinoic acid. Primarily catalyzes stereoselective epoxidation of the last double bond of polyunsaturated fatty acids (PUFA), displaying a strong preference for the (R,S) stereoisomer. Catalyzes bisallylic hydroxylation and omega-1 hydroxylation of PUFA. May also participate in eicosanoids metabolism by converting hydroperoxide species into oxo metabolites (lipoxygenase-like reaction, NADPH-independent). Plays a role in the oxidative metabolism of xenobiotics. Catalyzes the N-hydroxylation of heterocyclic amines and the O-deethylation of phenacetin. Metabolizes caffeine via N3-demethylation. The chain is Cytochrome P450 1A2 from Homo sapiens (Human).